Here is a 123-residue protein sequence, read N- to C-terminus: Small ribosomal subunit protein uS12 (123 aa).

Asp89 is modified (3-methylthioaspartic acid).

The protein belongs to the universal ribosomal protein uS12 family. As to quaternary structure, part of the 30S ribosomal subunit. Contacts proteins S8 and S17. May interact with IF1 in the 30S initiation complex.

Its function is as follows. With S4 and S5 plays an important role in translational accuracy. In terms of biological role, interacts with and stabilizes bases of the 16S rRNA that are involved in tRNA selection in the A site and with the mRNA backbone. Located at the interface of the 30S and 50S subunits, it traverses the body of the 30S subunit contacting proteins on the other side and probably holding the rRNA structure together. The combined cluster of proteins S8, S12 and S17 appears to hold together the shoulder and platform of the 30S subunit. In Acidiphilium cryptum (strain JF-5), this protein is Small ribosomal subunit protein uS12.